Here is an 87-residue protein sequence, read N- to C-terminus: U3-theraphotoxin-Hhn1a 6 (87 aa).

The signal sequence occupies residues 1–24; the sequence is MVNMKASMFLTFAGLVLLFVVCYA. A propeptide spanning residues 25–52 is cleaved from the precursor; the sequence is SESEKKEFPKEMLSSIFAVDNDFKQEER. Cystine bridges form between Cys-54-Cys-67, Cys-61-Cys-72, and Cys-66-Cys-79.

The protein belongs to the neurotoxin 10 (Hwtx-1) family. 51 (Hntx-8) subfamily. Hntx-8 sub-subfamily. In terms of tissue distribution, expressed by the venom gland.

The protein localises to the secreted. Functionally, ion channel inhibitor. This is U3-theraphotoxin-Hhn1a 6 from Cyriopagopus hainanus (Chinese bird spider).